A 353-amino-acid chain; its full sequence is Photosystem II D2 protein (353 aa).

Residue Thr-2 is modified to N-acetylthreonine. A Phosphothreonine modification is found at Thr-2. The helical transmembrane segment at 41–61 (CAYFALGGWFTGTTFVTSWYT) threads the bilayer. His-118 contacts chlorophyll a. The chain crosses the membrane as a helical span at residues 125-141 (GFMLRQFELARSVQLRP). Gln-130 and Asn-143 together coordinate pheophytin a. The helical transmembrane segment at 153 to 166 (VFVSVFLIYPLGQS) threads the bilayer. His-198 contacts chlorophyll a. Residues 208–228 (AALLCAIHGATVENTLFEDGD) traverse the membrane as a helical segment. 2 residues coordinate a plastoquinone: His-215 and Phe-262. His-215 lines the Fe cation pocket. Residue His-269 participates in Fe cation binding. A helical transmembrane segment spans residues 279-295 (GLWMSALGVVGLALNLR).

Belongs to the reaction center PufL/M/PsbA/D family. As to quaternary structure, PSII is composed of 1 copy each of membrane proteins PsbA, PsbB, PsbC, PsbD, PsbE, PsbF, PsbH, PsbI, PsbJ, PsbK, PsbL, PsbM, PsbT, PsbX, PsbY, PsbZ, Psb30/Ycf12, at least 3 peripheral proteins of the oxygen-evolving complex and a large number of cofactors. It forms dimeric complexes. The D1/D2 heterodimer binds P680, chlorophylls that are the primary electron donor of PSII, and subsequent electron acceptors. It shares a non-heme iron and each subunit binds pheophytin, quinone, additional chlorophylls, carotenoids and lipids. There is also a Cl(-1) ion associated with D1 and D2, which is required for oxygen evolution. The PSII complex binds additional chlorophylls, carotenoids and specific lipids. is required as a cofactor.

Its subcellular location is the plastid. It is found in the chloroplast thylakoid membrane. It carries out the reaction 2 a plastoquinone + 4 hnu + 2 H2O = 2 a plastoquinol + O2. Photosystem II (PSII) is a light-driven water:plastoquinone oxidoreductase that uses light energy to abstract electrons from H(2)O, generating O(2) and a proton gradient subsequently used for ATP formation. It consists of a core antenna complex that captures photons, and an electron transfer chain that converts photonic excitation into a charge separation. The D1/D2 (PsbA/PsbD) reaction center heterodimer binds P680, the primary electron donor of PSII as well as several subsequent electron acceptors. D2 is needed for assembly of a stable PSII complex. In Barbarea verna (Land cress), this protein is Photosystem II D2 protein.